An 81-amino-acid chain; its full sequence is Trefoil factor 1 (81 aa).

A signal peptide spans 1-23 (MEHRVIYVLVLVCALTLSSLAQG). The region spanning 26–69 (ETCTVAPHHRDNCGSPGITPSQCKDKGCCFDNTVRGVPWCYYPV) is the P-type domain. 3 disulfides stabilise this stretch: cysteine 28–cysteine 54, cysteine 38–cysteine 53, and cysteine 48–cysteine 65.

Its subcellular location is the secreted. Its function is as follows. Stabilizer of the mucous gel overlying the gastrointestinal mucosa that provides a physical barrier against various noxious agents. In Canis lupus familiaris (Dog), this protein is Trefoil factor 1 (TFF1).